The primary structure comprises 295 residues: Acetyl-coenzyme A carboxylase carboxyl transferase subunit beta (295 aa).

The tract at residues 1 to 20 is disordered; it reads MSWLSKLMPSGIRTENTPAK. The CoA carboxyltransferase N-terminal domain maps to 28–295; sequence LWEKCSNCGS…QPHPQDADAA (268 aa). Zn(2+) is bound by residues Cys-32, Cys-35, Cys-51, and Cys-54. The C4-type zinc-finger motif lies at 32-54; that stretch reads CSNCGSALYGPELEENLEVCPKC.

Belongs to the AccD/PCCB family. Acetyl-CoA carboxylase is a heterohexamer composed of biotin carboxyl carrier protein (AccB), biotin carboxylase (AccC) and two subunits each of ACCase subunit alpha (AccA) and ACCase subunit beta (AccD). The cofactor is Zn(2+).

It localises to the cytoplasm. The catalysed reaction is N(6)-carboxybiotinyl-L-lysyl-[protein] + acetyl-CoA = N(6)-biotinyl-L-lysyl-[protein] + malonyl-CoA. The protein operates within lipid metabolism; malonyl-CoA biosynthesis; malonyl-CoA from acetyl-CoA: step 1/1. Its function is as follows. Component of the acetyl coenzyme A carboxylase (ACC) complex. Biotin carboxylase (BC) catalyzes the carboxylation of biotin on its carrier protein (BCCP) and then the CO(2) group is transferred by the transcarboxylase to acetyl-CoA to form malonyl-CoA. The chain is Acetyl-coenzyme A carboxylase carboxyl transferase subunit beta from Xanthomonas oryzae pv. oryzae (strain MAFF 311018).